The sequence spans 432 residues: Ribosomal protein uS12 methylthiotransferase RimO (432 aa).

Positions 1-112 (MKIGVVSLGC…ILNYLGLKEK (112 aa)) constitute an MTTase N-terminal domain. [4Fe-4S] cluster is bound by residues C10, C46, C75, C134, C138, and C141. In terms of domain architecture, Radical SAM core spans 120-350 (STPRSYAYLK…MAIQRGITRK (231 aa)). A TRAM domain is found at 353-422 (EEFLGKEIEV…DYDLAGRDTE (70 aa)).

Belongs to the methylthiotransferase family. RimO subfamily. [4Fe-4S] cluster is required as a cofactor.

It is found in the cytoplasm. The enzyme catalyses L-aspartate(89)-[ribosomal protein uS12]-hydrogen + (sulfur carrier)-SH + AH2 + 2 S-adenosyl-L-methionine = 3-methylsulfanyl-L-aspartate(89)-[ribosomal protein uS12]-hydrogen + (sulfur carrier)-H + 5'-deoxyadenosine + L-methionine + A + S-adenosyl-L-homocysteine + 2 H(+). Functionally, catalyzes the methylthiolation of an aspartic acid residue of ribosomal protein uS12. This is Ribosomal protein uS12 methylthiotransferase RimO from Aquifex aeolicus (strain VF5).